A 252-amino-acid polypeptide reads, in one-letter code: MSFTVVIPARYQSTRLPGKPLADIGGKPMIQWVYEQAMQAGADRVIIATDDERVEQAVQAFGGVVCMTSPNHQSGTERLAEVVAKMAIPADHIVVNVQGDEPLIPPAIIRQVADNLAACSAPMATLAVEIEDEAEVFNPNAVKVITDKSGYALYFSRATIPWDRDNFAKADKAIVQPLLRHIGIYAYRAGFINTYLDWQPSQLEKIECLEQLRVLWHGEKIHVAVALEAPPAGVDTPEDLEVVRRIVAERAQ.

The protein belongs to the KdsB family.

The protein resides in the cytoplasm. The enzyme catalyses 3-deoxy-alpha-D-manno-oct-2-ulosonate + CTP = CMP-3-deoxy-beta-D-manno-octulosonate + diphosphate. It participates in nucleotide-sugar biosynthesis; CMP-3-deoxy-D-manno-octulosonate biosynthesis; CMP-3-deoxy-D-manno-octulosonate from 3-deoxy-D-manno-octulosonate and CTP: step 1/1. Its pathway is bacterial outer membrane biogenesis; lipopolysaccharide biosynthesis. Its function is as follows. Activates KDO (a required 8-carbon sugar) for incorporation into bacterial lipopolysaccharide in Gram-negative bacteria. This Vibrio cholerae serotype O1 (strain ATCC 39315 / El Tor Inaba N16961) protein is 3-deoxy-manno-octulosonate cytidylyltransferase.